The following is a 444-amino-acid chain: Argininosuccinate synthase (444 aa).

Residues 18 to 26 and Ala44 each bind ATP; that span reads AFSGGLDTS. Residue Tyr100 coordinates L-citrulline. ATP contacts are provided by Gly130 and Thr132. Thr132, Asn136, and Asp137 together coordinate L-aspartate. Asn136 is a binding site for L-citrulline. Residue Asp137 participates in ATP binding. L-citrulline contacts are provided by Arg140 and Ser193. Asp195 is a binding site for ATP. L-citrulline-binding residues include Thr202, Glu204, and Glu281.

Belongs to the argininosuccinate synthase family. Type 2 subfamily. Homotetramer.

Its subcellular location is the cytoplasm. It carries out the reaction L-citrulline + L-aspartate + ATP = 2-(N(omega)-L-arginino)succinate + AMP + diphosphate + H(+). The protein operates within amino-acid biosynthesis; L-arginine biosynthesis; L-arginine from L-ornithine and carbamoyl phosphate: step 2/3. This is Argininosuccinate synthase from Actinobacillus succinogenes (strain ATCC 55618 / DSM 22257 / CCUG 43843 / 130Z).